The following is an 83-amino-acid chain: Exodeoxyribonuclease 7 small subunit (83 aa).

It belongs to the XseB family. As to quaternary structure, heterooligomer composed of large and small subunits.

The protein resides in the cytoplasm. It carries out the reaction Exonucleolytic cleavage in either 5'- to 3'- or 3'- to 5'-direction to yield nucleoside 5'-phosphates.. In terms of biological role, bidirectionally degrades single-stranded DNA into large acid-insoluble oligonucleotides, which are then degraded further into small acid-soluble oligonucleotides. This Rhizobium etli (strain ATCC 51251 / DSM 11541 / JCM 21823 / NBRC 15573 / CFN 42) protein is Exodeoxyribonuclease 7 small subunit.